The chain runs to 257 residues: Beta-fibrinogenase mucrofibrase-3 (257 aa).

An N-terminal signal peptide occupies residues 1 to 18 (MVLIRVLANLLILQLSYA). Positions 19–24 (QKSSEL) are excised as a propeptide. Positions 25–248 (VIGGDECNIN…HLDWIKGIIA (224 aa)) constitute a Peptidase S1 domain. 6 disulfides stabilise this stretch: Cys-31/Cys-162, Cys-49/Cys-65, Cys-97/Cys-255, Cys-141/Cys-209, Cys-173/Cys-188, and Cys-199/Cys-224. Residues His-64 and Asp-109 each act as charge relay system in the active site. Ser-203 serves as the catalytic Charge relay system.

Belongs to the peptidase S1 family. Snake venom subfamily. Monomer. Expressed by the venom gland.

The protein localises to the secreted. In terms of biological role, snake venom serine protease with fibrinogenolytic activities. Cleaves beta-chain of fibrinogen (FGB) efficiently and shows relatively lower activity on alpha-chain. The polypeptide is Beta-fibrinogenase mucrofibrase-3 (Protobothrops mucrosquamatus (Taiwan habu)).